A 487-amino-acid polypeptide reads, in one-letter code: Histamine H1 receptor (487 aa).

At 1–29 (MSLPNSSCLLEDKMCEGNKTTMASPQLMP) the chain is on the extracellular side. N-linked (GlcNAc...) asparagine glycans are attached at residues N5 and N18. A helical transmembrane segment spans residues 30 to 50 (LVVVLSTICLVTVGLNLLVLY). At 51-64 (AVRSERKLHTVGNL) the chain is on the cytoplasmic side. The chain crosses the membrane as a helical span at residues 65 to 89 (YIVSLSVADLIVGAVVMPMNILYLL). Residues 90–97 (MSKWSLGR) lie on the Extracellular side of the membrane. Residues 98–123 (PLCLFWLSMDYVASTASIFSVFILCI) form a helical membrane-spanning segment. An intrachain disulfide couples C100 to C180. Residues D107 and T112 each coordinate histamine. Positions 107–112 (DYVAST) are important for agonist binding. Residues 124 to 144 (DRYRSVQQPLRYLKYRTKTRA) are Cytoplasmic-facing. Phosphothreonine is present on residues T140 and T142. Residues 145–164 (SATILGAWFLSFLWVIPILG) form a helical membrane-spanning segment. At 165 to 188 (WNHFMQQTSVRREDKCETDFYDVT) the chain is on the extracellular side. Residues 189 to 211 (WFKVMTAIINFYLPTLLMLWFYA) traverse the membrane as a helical segment. Residue N198 coordinates histamine. Topologically, residues 212–416 (KIYKAVRQHC…MNRERKAAKQ (205 aa)) are cytoplasmic. S230 carries the post-translational modification Phosphoserine. A compositionally biased stretch (basic and acidic residues) spans 238–261 (KLRPENPKGDAKKPGKESPWEVLK). The disordered stretch occupies residues 238 to 292 (KLRPENPKGDAKKPGKESPWEVLKRKPKDAGGGSVLKSPSQTXKEMKSPVVFSQE). T279 is modified (phosphothreonine). S344 and S347 each carry phosphoserine. Residues 345-379 (EISEDQMLGDSQSFSRTDSDTTTETAPGKGKLRSG) form a disordered region. The span at 353–369 (GDSQSFSRTDSDTTTET) shows a compositional bias: polar residues. S380, S396, and S398 each carry phosphoserine. A helical transmembrane segment spans residues 417 to 440 (LGFIMAAFILCWIPYFIFFMVIAF). The important for agonist binding stretch occupies residues 424 to 428 (FILCW). Position 431 (Y431) interacts with histamine. An intrachain disulfide couples C441 to C444. Residues 441–446 (CKNCCN) are Extracellular-facing. Residues 447-469 (EHLHMFTIWLGYINSTLNPLIYP) traverse the membrane as a helical segment. Residues 470–487 (LCNENFKKTFKRILHIRS) lie on the Cytoplasmic side of the membrane.

Belongs to the G-protein coupled receptor 1 family. In terms of processing, phosphorylation at sites in the second and third cytoplasmic loops independently contribute to agonist-induced receptor down-regulation.

It is found in the cell membrane. In terms of biological role, G-protein-coupled receptor for histamine, a biogenic amine that functions as an immune modulator and a neurotransmitter. Through the H1 receptor, histamine mediates the contraction of smooth muscles and increases capillary permeability due to contraction of terminal venules. Also mediates neurotransmission in the central nervous system and thereby regulates circadian rhythms, emotional and locomotor activities as well as cognitive functions. In Pan troglodytes (Chimpanzee), this protein is Histamine H1 receptor.